The following is a 953-amino-acid chain: Homeobox protein LUMINIDEPENDENS (953 aa).

The homeobox DNA-binding region spans 63-123; sequence KIGKRPRDLL…VTQKTRVRKQ (61 aa). The interval 404-430 is disordered; sequence EQPGQKAAGKSPQTVRIGTSGRSRPMS. The span at 414-425 shows a compositional bias: polar residues; the sequence is SPQTVRIGTSGR. Repeat copies occupy residues 498–502, 507–511, 516–520, 525–529, and 534–538. Residues 498 to 538 are 5 X 5 AA repeats of Q-P-V-N-G; sequence QPVNGFSTIQPVNGPSAVQPVNGPLAVQPVNGPSALQPVNG. 3 disordered regions span residues 606–668, 733–763, and 861–953; these read NSKE…EPQD, APNS…NPGM, and VGQM…KRWR. A compositionally biased stretch (basic and acidic residues) spans 608–623; it reads KEADVQRNRNRRERET. Residues 651 to 661 show a composition bias toward low complexity; the sequence is PEIPSQQPPEE. Positions 733–742 are enriched in polar residues; the sequence is APNSSSSSNK. Over residues 869 to 884 the composition is skewed to low complexity; the sequence is SSSWRSQQSQNSYYSH. Composition is skewed to polar residues over residues 888 to 934 and 942 to 953; these read EIAS…QQQA and THPYWNQNKRWR.

Interacts with SUF4. In terms of tissue distribution, expressed in shoot apex, root apex, leaf primordia and floral buds.

It is found in the nucleus. Its function is as follows. Seems to play a role in the regulation of flowering time in the autonomous flowering pathway by repressing FLOWERING LOCUS C expression. This Arabidopsis thaliana (Mouse-ear cress) protein is Homeobox protein LUMINIDEPENDENS (LD).